The chain runs to 302 residues: 4-hydroxy-tetrahydrodipicolinate synthase (302 aa).

T46 is a pyruvate binding site. Y134 serves as the catalytic Proton donor/acceptor. The Schiff-base intermediate with substrate role is filled by K162. V204 contributes to the pyruvate binding site.

It belongs to the DapA family. In terms of assembly, homotetramer; dimer of dimers.

It localises to the cytoplasm. It carries out the reaction L-aspartate 4-semialdehyde + pyruvate = (2S,4S)-4-hydroxy-2,3,4,5-tetrahydrodipicolinate + H2O + H(+). Its pathway is amino-acid biosynthesis; L-lysine biosynthesis via DAP pathway; (S)-tetrahydrodipicolinate from L-aspartate: step 3/4. Catalyzes the condensation of (S)-aspartate-beta-semialdehyde [(S)-ASA] and pyruvate to 4-hydroxy-tetrahydrodipicolinate (HTPA). The chain is 4-hydroxy-tetrahydrodipicolinate synthase from Xanthomonas campestris pv. campestris (strain ATCC 33913 / DSM 3586 / NCPPB 528 / LMG 568 / P 25).